We begin with the raw amino-acid sequence, 345 residues long: Viral Fc-gamma receptor-like protein UL119 (345 aa).

A signal peptide spans 1-23; that stretch reads MCSVLAIALVVALLGDMHPGVKS. The disordered stretch occupies residues 23-43; that stretch reads SSTTSAVTSPSNTTVTSTTSI. Topologically, residues 24–293 are virion surface; it reads STTSAVTSPS…IKSDPLFEDR (270 aa). N-linked (GlcNAc...) asparagine; by host glycosylation is found at Asn-34, Asn-48, Asn-95, Asn-104, Asn-148, Asn-179, Asn-198, Asn-217, Asn-225, Asn-241, Asn-244, and Asn-260. The 100-residue stretch at 91–190 folds into the Ig-like V-type domain; sequence QVSLNATCKV…TWDLFTYPIY (100 aa). A helical transmembrane segment spans residues 294–314; it reads LLAYGVLAFLVFMVIILLYVT. Topologically, residues 315–345 are intravirion; that stretch reads YMLARRRDWSYKRLEEPVEEKKHPVPYFKQW.

It localises to the virion membrane. Its function is as follows. Serves as a receptor for the Fc part of human IgG. May thus be involved in interfering with host Ig-mediated immune responses. This is Viral Fc-gamma receptor-like protein UL119 (UL119/UL118) from Homo sapiens (Human).